A 481-amino-acid polypeptide reads, in one-letter code: MTVETFHPKQTTTLETPAKTLEAASADSVNTGNVATGNRIGFVSLGCPKNLVDSERILTQLRIDGYEVTNSYDNADLVIVNTCGFIDAAVEESLDAVREALEENGKVIVTGCLGAKENQIREVHPDVLEITGPHSYEAVLKHVHKYVPKPEHNPFTSLIPQTGVKLTPKHYAYLKISEGCDNRCTFCIIPALRGDLDSRGAGSVLDEAKRLVEAGVQEILVVSQDTSAYGKDKGGRTDFWNGMPVKQDITSLARQLGKMGAWVRLHYIYPYPWVDDLIPLMAEGLILPYLDIPMQHASPRILKMMKRPGRVDRQLEAIQRWREICPDLVIRSTFIVGFPGETEEDFEMLLDFLREARLDRVGCFKYSEVEGAVANTIAELISEEVKEDRYHRFMEVQAEISAERLARFVGRTMDILIDDVDEEGAIGRSFADAPEIDGMVFINGETELEPGMLVRAVITHSDEHDLWAELVDADAEDEVEA.

Residues 38-148 form the MTTase N-terminal domain; it reads NRIGFVSLGC…VLKHVHKYVP (111 aa). The [4Fe-4S] cluster site is built by C47, C83, C112, C180, C184, and C187. A Radical SAM core domain is found at 166–403; that stretch reads LTPKHYAYLK…MEVQAEISAE (238 aa). The TRAM domain maps to 406–472; the sequence is ARFVGRTMDI…EHDLWAELVD (67 aa).

Belongs to the methylthiotransferase family. RimO subfamily. It depends on [4Fe-4S] cluster as a cofactor.

It is found in the cytoplasm. It catalyses the reaction L-aspartate(89)-[ribosomal protein uS12]-hydrogen + (sulfur carrier)-SH + AH2 + 2 S-adenosyl-L-methionine = 3-methylsulfanyl-L-aspartate(89)-[ribosomal protein uS12]-hydrogen + (sulfur carrier)-H + 5'-deoxyadenosine + L-methionine + A + S-adenosyl-L-homocysteine + 2 H(+). Catalyzes the methylthiolation of an aspartic acid residue of ribosomal protein uS12. This chain is Ribosomal protein uS12 methylthiotransferase RimO, found in Shewanella oneidensis (strain ATCC 700550 / JCM 31522 / CIP 106686 / LMG 19005 / NCIMB 14063 / MR-1).